Here is a 243-residue protein sequence, read N- to C-terminus: 7-cyano-7-deazaguanine synthase (243 aa).

Position 18 to 28 (F18 to L28) interacts with ATP. Zn(2+)-binding residues include C206, C221, C224, and C227.

The protein belongs to the QueC family. Zn(2+) serves as cofactor.

The catalysed reaction is 7-carboxy-7-deazaguanine + NH4(+) + ATP = 7-cyano-7-deazaguanine + ADP + phosphate + H2O + H(+). The protein operates within purine metabolism; 7-cyano-7-deazaguanine biosynthesis. Catalyzes the ATP-dependent conversion of 7-carboxy-7-deazaguanine (CDG) to 7-cyano-7-deazaguanine (preQ(0)). This Methylorubrum extorquens (strain CM4 / NCIMB 13688) (Methylobacterium extorquens) protein is 7-cyano-7-deazaguanine synthase.